A 293-amino-acid chain; its full sequence is Urease accessory protein UreD (293 aa).

Belongs to the UreD family. In terms of assembly, ureD, UreF and UreG form a complex that acts as a GTP-hydrolysis-dependent molecular chaperone, activating the urease apoprotein by helping to assemble the nickel containing metallocenter of UreC. The UreE protein probably delivers the nickel.

It is found in the cytoplasm. Its function is as follows. Required for maturation of urease via the functional incorporation of the urease nickel metallocenter. The sequence is that of Urease accessory protein UreD from Cupriavidus metallidurans (strain ATCC 43123 / DSM 2839 / NBRC 102507 / CH34) (Ralstonia metallidurans).